We begin with the raw amino-acid sequence, 336 residues long: Aspartate carbamoyltransferase catalytic subunit (336 aa).

The carbamoyl phosphate site is built by R72 and T73. K100 serves as a coordination point for L-aspartate. R122, H152, and Q155 together coordinate carbamoyl phosphate. Residues R185 and R240 each contribute to the L-aspartate site. Residues G281 and P282 each coordinate carbamoyl phosphate.

It belongs to the aspartate/ornithine carbamoyltransferase superfamily. ATCase family. Heterododecamer (2C3:3R2) of six catalytic PyrB chains organized as two trimers (C3), and six regulatory PyrI chains organized as three dimers (R2).

The catalysed reaction is carbamoyl phosphate + L-aspartate = N-carbamoyl-L-aspartate + phosphate + H(+). It participates in pyrimidine metabolism; UMP biosynthesis via de novo pathway; (S)-dihydroorotate from bicarbonate: step 2/3. Its function is as follows. Catalyzes the condensation of carbamoyl phosphate and aspartate to form carbamoyl aspartate and inorganic phosphate, the committed step in the de novo pyrimidine nucleotide biosynthesis pathway. This is Aspartate carbamoyltransferase catalytic subunit from Marinobacter nauticus (strain ATCC 700491 / DSM 11845 / VT8) (Marinobacter aquaeolei).